Here is a 244-residue protein sequence, read N- to C-terminus: MKIDILTLFPDMFTGVFGSSILKKAQEKEAVNLRVVNFRDYTTSKHNSVDDYPYGGGAGMVLTPQPIFDAVEDLTKETERKPRVVLMCPQGERFTQKKAEELAGEEHLIFVCGHYEGYDERIREHLVTDEISIGDYVLTGGELASMVITDSVVRLLPGVLGNHASQVEDSFSTGLLEHPHYTRPADFRGMKVPDVLMSGNHKNIDEWRHKESLRRTYTRRPDLLDDRDLSKQEKKWLEEIKREQ.

Residues G113 and 133–138 (IGDYVL) contribute to the S-adenosyl-L-methionine site.

This sequence belongs to the RNA methyltransferase TrmD family. Homodimer.

The protein resides in the cytoplasm. It carries out the reaction guanosine(37) in tRNA + S-adenosyl-L-methionine = N(1)-methylguanosine(37) in tRNA + S-adenosyl-L-homocysteine + H(+). Functionally, specifically methylates guanosine-37 in various tRNAs. The polypeptide is tRNA (guanine-N(1)-)-methyltransferase (Bacillus cereus (strain G9842)).